A 618-amino-acid chain; its full sequence is ADP,ATP carrier protein 2, chloroplastic (618 aa).

The N-terminal 76 residues, 1-76 (MEGLIQTRGI…KERSRGFICK (76 aa)), are a transit peptide targeting the chloroplast. A77 is subject to N-acetylalanine. 11 consecutive transmembrane segments (helical) span residues 110-130 (LKKIVPLGLMFFCILFNYTIL), 148-168 (IIPFLKTWVNLPMAIGFMLLY), 179-199 (ALFYTVIVPFIVYFGAFGFVM), 237-257 (LFYVMAELWGSVVVSVLFWGF), 270-289 (FYPLFGLGANVALIFSGRTV), 312-332 (AMMSIVVGMGLAICFLYWWVN), 368-388 (LATLVVAYGISINLVEVTWKS), 401-421 (SAFMGDFSTCTGIATFTMMLL), 441-461 (VLLLTGVAFFSLILFGGPFAP), 464-484 (AKLGMTPLLAAVYVGALQNIF), and 542-562 (LANSTPYLGVILLGIVTAWLA). The disordered stretch occupies residues 586 to 618 (RASSVKIPVVSQEDAPSGETTSQLSEKSTPTGI). The span at 603–618 (GETTSQLSEKSTPTGI) shows a compositional bias: polar residues.

This sequence belongs to the ADP/ATP translocase tlc (TC 2.A.12.2) family.

It localises to the plastid. Its subcellular location is the chloroplast membrane. This Arabidopsis thaliana (Mouse-ear cress) protein is ADP,ATP carrier protein 2, chloroplastic (AATP2).